The primary structure comprises 312 residues: Cytochrome f (312 aa).

The first 28 residues, 1 to 28 (MQISKFFKFVFISVSLCGSLLFPQMANA), serve as a signal peptide directing secretion. Heme is bound by residues Tyr-29, Cys-49, Cys-52, and His-53. The helical transmembrane segment at 278 to 298 (VKGMIAFFFTVTVAQILLVLK) threads the bilayer.

The protein belongs to the cytochrome f family. The 4 large subunits of the cytochrome b6-f complex are cytochrome b6, subunit IV (17 kDa polypeptide, petD), cytochrome f and the Rieske protein, while the 4 small subunits are PetG, PetL, PetM and PetN. The complex functions as a dimer. Heme serves as cofactor.

Its subcellular location is the plastid. It is found in the chloroplast thylakoid membrane. Functionally, component of the cytochrome b6-f complex, which mediates electron transfer between photosystem II (PSII) and photosystem I (PSI), cyclic electron flow around PSI, and state transitions. In Emiliania huxleyi (Coccolithophore), this protein is Cytochrome f.